The primary structure comprises 211 residues: RING finger protein narya (211 aa).

An RING-type zinc finger spans residues 6-47 (CNKCFRHRKTDPAVPFHLTQCRHVICGPCLGQSSLEKNCPLC). The tract at residues 149–211 (RRRHSAGERF…FGSDTKGFRL (63 aa)) is disordered. The span at 153–165 (SAGERFHTPEFKE) shows a compositional bias: basic and acidic residues. Residues 172–184 (STSDKSPSDMPSD) show a composition bias toward low complexity.

May interact with itself, with nenya and vilya through its RING-type zinc finger. In terms of tissue distribution, expressed in nurse cell and pro-oocytes (at protein level).

Its subcellular location is the chromosome. Functionally, required for the formation of DNA double-strand breaks (DSBs) together with nenya and vilya during the meiotic recombination process. Plays a role in DSBs processing into crossovers. Plays a redundant role with nenya in chromosome segregation during female meiosis. This Drosophila melanogaster (Fruit fly) protein is RING finger protein narya.